The chain runs to 446 residues: Argininosuccinate synthase (446 aa).

Residues 17-25 and A43 contribute to the ATP site; that span reads AFSGGLDTS. L-citrulline is bound at residue Y99. G129 and T131 together coordinate ATP. 3 residues coordinate L-aspartate: T131, N135, and D136. N135 serves as a coordination point for L-citrulline. Residue D136 participates in ATP binding. The L-citrulline site is built by R139 and S192. ATP is bound at residue D194. Residues T201, E203, and E280 each coordinate L-citrulline.

Belongs to the argininosuccinate synthase family. Type 2 subfamily. Homotetramer.

It is found in the cytoplasm. The catalysed reaction is L-citrulline + L-aspartate + ATP = 2-(N(omega)-L-arginino)succinate + AMP + diphosphate + H(+). Its pathway is amino-acid biosynthesis; L-arginine biosynthesis; L-arginine from L-ornithine and carbamoyl phosphate: step 2/3. In Burkholderia thailandensis (strain ATCC 700388 / DSM 13276 / CCUG 48851 / CIP 106301 / E264), this protein is Argininosuccinate synthase.